The sequence spans 1268 residues: Protein transport protein Sec24B (1268 aa).

Low complexity-rich tracts occupy residues 1 to 14 and 21 to 48; these read MSAP…AASA and GGAA…GPAQ. Disordered regions lie at residues 1-71, 216-263, 303-345, and 362-451; these read MSAP…SGHY, APTV…LTWS, QNVQ…SVTQ, and NNQA…VVPQ. S2 is subject to N-acetylserine. S55 carries the post-translational modification Phosphoserine. The span at 225 to 234 shows a compositional bias: polar residues; sequence NSFSGQNTAI. 3 stretches are compositionally biased toward low complexity: residues 245–255, 311–332, and 365–375; these read SQQHHQQQSLS, SPVV…TPPT, and ASSAPTPLSST. Phosphothreonine is present on T329. Residues 376–389 are compositionally biased toward acidic residues; it reads SDDEEEEEEDEEAG. Over residues 426-450 the composition is skewed to pro residues; that stretch reads APDPAPEPDPASAPAPASAPAPVVP. Positions 605, 608, 626, and 629 each coordinate Zn(2+). Residues 605 to 629 are zinc finger-like; it reads CRSCRTYINPFVSFIDQRRWKCNLC. The stretch at 1141–1213 is one Gelsolin-like repeat; that stretch reads PQPPLQKLSA…TLSSERARSF (73 aa). S1224 is subject to Phosphoserine.

It belongs to the SEC23/SEC24 family. SEC24 subfamily. COPII is composed of at least five proteins: the Sec23/24 complex, the Sec13/31 complex and SAR1. Interacts with STING1; promoting STING1 translocation to COPII vesicles in a STEEP1-dependent manner. Interacts with RNF139. Interacts with TMED2 and TMED10. Interacts with CNIH4.

The protein resides in the cytoplasmic vesicle. Its subcellular location is the COPII-coated vesicle membrane. It is found in the endoplasmic reticulum membrane. The protein localises to the cytoplasm. It localises to the cytosol. In terms of biological role, component of the coat protein complex II (COPII) which promotes the formation of transport vesicles from the endoplasmic reticulum (ER). The coat has two main functions, the physical deformation of the endoplasmic reticulum membrane into vesicles and the selection of cargo molecules for their transport to the Golgi complex. Plays a central role in cargo selection within the COPII complex and together with SEC24A may have a different specificity compared to SEC24C and SEC24D. May package preferentially cargos with cytoplasmic DxE or LxxLE motifs and may also recognize conformational epitopes. The polypeptide is Protein transport protein Sec24B (Homo sapiens (Human)).